A 216-amino-acid polypeptide reads, in one-letter code: Probable GTP-binding protein EngB (216 aa).

An EngB-type G domain is found at 24–205 (ATPEIAFVGR…WARLAALAAE (182 aa)). Residues 32-39 (GRSNVGKS), 59-63 (GRTRA), 86-89 (DLPG), 153-156 (TKTD), and 184-186 (FSA) each bind GTP. Mg(2+) contacts are provided by Ser-39 and Thr-61.

This sequence belongs to the TRAFAC class TrmE-Era-EngA-EngB-Septin-like GTPase superfamily. EngB GTPase family. Mg(2+) is required as a cofactor.

Functionally, necessary for normal cell division and for the maintenance of normal septation. The sequence is that of Probable GTP-binding protein EngB from Anaeromyxobacter dehalogenans (strain 2CP-C).